The chain runs to 47 residues: Snake venom metalloproteinase jararafibrase-4 (47 aa).

Residues Arg6 to Leu47 form the Peptidase M12B domain. Ca(2+) is bound at residue Glu9.

This sequence belongs to the venom metalloproteinase (M12B) family. Monomer. Requires Zn(2+) as cofactor. In terms of tissue distribution, expressed by the venom gland.

Its subcellular location is the secreted. Inhibited by 1,10-phenanthroline and EDTA. The metalloproteinase is a probable venom zinc protease that induces local hemorrhage in the skin of rats. Degrades type-IV collagen, gelatin, laminin and fibronectin. Has fibrinolytic activities. Has high hemagglutinating activity on red blood cells. Cleaves insulin B chain at 29-His-|-Leu-30, and 38-Ala-|-Leu-39 bonds. This chain is Snake venom metalloproteinase jararafibrase-4, found in Bothrops jararaca (Jararaca).